An 81-amino-acid polypeptide reads, in one-letter code: Small ribosomal subunit protein bS20 (81 aa).

Basic residues predominate over residues 1–11 (MPNIKSQKKRV). A disordered region spans residues 1-20 (MPNIKSQKKRVLTNEKSRAS).

Belongs to the bacterial ribosomal protein bS20 family.

Functionally, binds directly to 16S ribosomal RNA. This Mesoplasma florum (strain ATCC 33453 / NBRC 100688 / NCTC 11704 / L1) (Acholeplasma florum) protein is Small ribosomal subunit protein bS20.